An 85-amino-acid polypeptide reads, in one-letter code: Small ribosomal subunit protein bS20 (85 aa).

It belongs to the bacterial ribosomal protein bS20 family.

Functionally, binds directly to 16S ribosomal RNA. The polypeptide is Small ribosomal subunit protein bS20 (Ruminiclostridium cellulolyticum (strain ATCC 35319 / DSM 5812 / JCM 6584 / H10) (Clostridium cellulolyticum)).